The sequence spans 541 residues: ATP synthase subunit beta (541 aa).

The interval 1-65 (MAKAVTSSKG…TPVKKEERAK (65 aa)) is disordered. Basic and acidic residues-rich tracts occupy residues 25–36 (VKKDASKSKDAS) and 52–65 (AAKD…ERAK). 214–221 (GGAGVGKT) contributes to the ATP binding site.

It belongs to the ATPase alpha/beta chains family. F-type ATPases have 2 components, CF(1) - the catalytic core - and CF(0) - the membrane proton channel. CF(1) has five subunits: alpha(3), beta(3), gamma(1), delta(1), epsilon(1). CF(0) has three main subunits: a(1), b(2) and c(9-12). The alpha and beta chains form an alternating ring which encloses part of the gamma chain. CF(1) is attached to CF(0) by a central stalk formed by the gamma and epsilon chains, while a peripheral stalk is formed by the delta and b chains.

The protein resides in the cell inner membrane. It carries out the reaction ATP + H2O + 4 H(+)(in) = ADP + phosphate + 5 H(+)(out). Functionally, produces ATP from ADP in the presence of a proton gradient across the membrane. The catalytic sites are hosted primarily by the beta subunits. The sequence is that of ATP synthase subunit beta from Bartonella tribocorum (strain CIP 105476 / IBS 506).